The primary structure comprises 99 residues: UPF0213 protein spr1390 (99 aa).

Residues 3–78 form the GIY-YIG domain; it reads HKAYMYVLEC…KRKKRPQKEE (76 aa).

Belongs to the UPF0213 family.

This Streptococcus pneumoniae (strain ATCC BAA-255 / R6) protein is UPF0213 protein spr1390.